The sequence spans 263 residues: Cytochrome c oxidase subunit 3 (263 aa).

Transmembrane regions (helical) follow at residues 7–27, 44–64, 78–98, 120–140, 145–165, 191–211, and 241–261; these read ITVL…KAHL, FSVG…VYSI, GMLS…WGIL, LILT…CLQF, GMSL…ECFA, VTGL…IYFI, and ITIL…YFFY.

This sequence belongs to the cytochrome c oxidase subunit 3 family. As to quaternary structure, component of the cytochrome c oxidase (complex IV, CIV), a multisubunit enzyme composed of a catalytic core of 3 subunits and several supernumerary subunits. The complex exists as a monomer or a dimer and forms supercomplexes (SCs) in the inner mitochondrial membrane with ubiquinol-cytochrome c oxidoreductase (cytochrome b-c1 complex, complex III, CIII).

The protein resides in the mitochondrion inner membrane. It catalyses the reaction 4 Fe(II)-[cytochrome c] + O2 + 8 H(+)(in) = 4 Fe(III)-[cytochrome c] + 2 H2O + 4 H(+)(out). Component of the cytochrome c oxidase, the last enzyme in the mitochondrial electron transport chain which drives oxidative phosphorylation. The respiratory chain contains 3 multisubunit complexes succinate dehydrogenase (complex II, CII), ubiquinol-cytochrome c oxidoreductase (cytochrome b-c1 complex, complex III, CIII) and cytochrome c oxidase (complex IV, CIV), that cooperate to transfer electrons derived from NADH and succinate to molecular oxygen, creating an electrochemical gradient over the inner membrane that drives transmembrane transport and the ATP synthase. Cytochrome c oxidase is the component of the respiratory chain that catalyzes the reduction of oxygen to water. Electrons originating from reduced cytochrome c in the intermembrane space (IMS) are transferred via the dinuclear copper A center (CU(A)) of subunit 2 and heme A of subunit 1 to the active site in subunit 1, a binuclear center (BNC) formed by heme A3 and copper B (CU(B)). The BNC reduces molecular oxygen to 2 water molecules using 4 electrons from cytochrome c in the IMS and 4 protons from the mitochondrial matrix. This is Cytochrome c oxidase subunit 3 (COIII) from Plasmodium vivax.